A 486-amino-acid polypeptide reads, in one-letter code: Glutamate--tRNA ligase (486 aa).

The short motif at 12–22 is the 'HIGH' region element; that stretch reads PSPTGTPHVGL. The short motif at 256 to 260 is the 'KMSKS' region element; that stretch reads KLSKR. Position 259 (K259) interacts with ATP.

Belongs to the class-I aminoacyl-tRNA synthetase family. Glutamate--tRNA ligase type 1 subfamily. As to quaternary structure, monomer.

It is found in the cytoplasm. It carries out the reaction tRNA(Glu) + L-glutamate + ATP = L-glutamyl-tRNA(Glu) + AMP + diphosphate. In terms of biological role, catalyzes the attachment of glutamate to tRNA(Glu) in a two-step reaction: glutamate is first activated by ATP to form Glu-AMP and then transferred to the acceptor end of tRNA(Glu). In Mycolicibacterium smegmatis (strain ATCC 700084 / mc(2)155) (Mycobacterium smegmatis), this protein is Glutamate--tRNA ligase.